An 806-amino-acid chain; its full sequence is Leucine--tRNA ligase (806 aa).

The short motif at 54–64 (SYPSGDLHMGH) is the 'HIGH' region element. Positions 571-575 (KMSKS) match the 'KMSKS' region motif. Residue lysine 574 coordinates ATP.

The protein belongs to the class-I aminoacyl-tRNA synthetase family.

The protein localises to the cytoplasm. It carries out the reaction tRNA(Leu) + L-leucine + ATP = L-leucyl-tRNA(Leu) + AMP + diphosphate. The sequence is that of Leucine--tRNA ligase from Tropheryma whipplei (strain TW08/27) (Whipple's bacillus).